We begin with the raw amino-acid sequence, 314 residues long: MKGKEEREREGGGGAVGPGAAGPGAGGGSPEKSHSAQEHKEQGNRLFGGRKYPEAAAAYGRAINRNPLVAVYYTNRALCYLKMQQHDKALADCKRALELDGQSVKAHFFLGQCQMEMENYDEAIANLQRAYNLAKEQRLNFGDDIPSALRIAKKKRWNSIEEKRINQENELHSYLTRLIMAEKERELAECRKAQQEENVDESRGRVQLAGIEAKHDKYLADMDELFSQVDEKRKKRDIPDYLCGKISFELMREPCITPSGITYDRKDIEEHLQRVGHFDPVTRSPLTQDQLIPNLAMKEVIDAFISENGWVEDY.

Over residues 1-11 (MKGKEEREREG) the composition is skewed to basic and acidic residues. Residues 1–47 (MKGKEEREREGGGGAVGPGAAGPGAGGGSPEKSHSAQEHKEQGNRLF) form a disordered region. Residues 12–29 (GGGAVGPGAAGPGAGGGS) are compositionally biased toward gly residues. Residues 31–43 (EKSHSAQEHKEQG) show a composition bias toward basic and acidic residues. TPR repeat units lie at residues 36 to 69 (AQEH…NPLV), 70 to 103 (AVYY…DGQS), and 105 to 137 (KAHF…AKEQ). The U-box domain maps to 237–311 (DIPDYLCGKI…DAFISENGWV (75 aa)).

In terms of assembly, homodimer.

Its subcellular location is the cytoplasm. It is found in the nucleus. The protein localises to the mitochondrion. The catalysed reaction is S-ubiquitinyl-[E2 ubiquitin-conjugating enzyme]-L-cysteine + [acceptor protein]-L-lysine = [E2 ubiquitin-conjugating enzyme]-L-cysteine + N(6)-ubiquitinyl-[acceptor protein]-L-lysine.. Functionally, E3 ubiquitin-protein ligase which targets misfolded chaperone substrates towards proteasomal degradation. Collaborates with ATXN3 in the degradation of misfolded chaperone substrates: ATXN3 restricting the length of ubiquitin chain attached to STUB1/CHIP substrates and preventing further chain extension. This Gallus gallus (Chicken) protein is E3 ubiquitin-protein ligase CHIP.